The following is a 227-amino-acid chain: Urease accessory protein UreF (227 aa).

The protein belongs to the UreF family. In terms of assembly, ureD, UreF and UreG form a complex that acts as a GTP-hydrolysis-dependent molecular chaperone, activating the urease apoprotein by helping to assemble the nickel containing metallocenter of UreC. The UreE protein probably delivers the nickel.

The protein localises to the cytoplasm. In terms of biological role, required for maturation of urease via the functional incorporation of the urease nickel metallocenter. In Bacillus sp. (strain TB-90), this protein is Urease accessory protein UreF.